The sequence spans 358 residues: MFSRSSSTRSSLVGSRSGSIFGGGSVKKSSTVRGFSAGLERSRGLPSASAGENQISLPGLRIPVKASSQPGNYYLKERGIDLPIVQQQKFLAADGKEMGECYLLDTSRTDLLDAAKAALNESNLLEFNKFKEFKKYKGKNNEFSLVEASVFDKLIRKDDSPIHLNRLLIAVLPAVGKGTPGTARIKIRDARLDDGYGELFSSENRVDSGYIYCINVGYSVPKSEIDYKINIDFAGVPIKDGKSPIWVKAAFSLAGGPPVFLDGTMSLGAEILPDSHKELLGTSALLLNEANSNRKSFSGDDGELRRDYPYKRFEEISPLDSISQVDTASQDSVNEVNTENVQNGTGEVYLAPPSHSVY.

In terms of biological role, transports viral genome to neighboring plant cells directly through plasmosdesmata, without any budding. The movement protein allows efficient cell to cell propagation, by bypassing the host cell wall barrier (Potential). The polypeptide is Putative movement protein (Raspberry bushy dwarf virus (isolate Malling Jewel raspberry/R15) (RBDV)).